Here is a 99-residue protein sequence, read N- to C-terminus: UPF0213 protein spr1390 (99 aa).

Residues 3–78 (HKAYMYVLEC…KRKKRPQKEE (76 aa)) enclose the GIY-YIG domain.

The protein belongs to the UPF0213 family.

The sequence is that of UPF0213 protein spr1390 from Streptococcus pneumoniae (strain ATCC BAA-255 / R6).